The primary structure comprises 451 residues: D-inositol 3-phosphate glycosyltransferase (451 aa).

1D-myo-inositol 3-phosphate is bound at residue His-21. UDP-N-acetyl-alpha-D-glucosamine is bound by residues 27–28 (QP) and Gly-35. 1D-myo-inositol 3-phosphate is bound by residues 32-37 (DAGGMN), Lys-90, Tyr-123, Thr-147, and Arg-167. Arg-241, Lys-246, and Gln-305 together coordinate UDP-N-acetyl-alpha-D-glucosamine. Residues Tyr-314, Arg-315, and Ala-317 each coordinate Mg(2+). Residues Glu-327 and Glu-335 each coordinate UDP-N-acetyl-alpha-D-glucosamine. Thr-341 contacts Mg(2+).

It belongs to the glycosyltransferase group 1 family. MshA subfamily. Homodimer.

The catalysed reaction is 1D-myo-inositol 3-phosphate + UDP-N-acetyl-alpha-D-glucosamine = 1D-myo-inositol 2-acetamido-2-deoxy-alpha-D-glucopyranoside 3-phosphate + UDP + H(+). Its function is as follows. Catalyzes the transfer of a N-acetyl-glucosamine moiety to 1D-myo-inositol 3-phosphate to produce 1D-myo-inositol 2-acetamido-2-deoxy-glucopyranoside 3-phosphate in the mycothiol biosynthesis pathway. This Nocardia farcinica (strain IFM 10152) protein is D-inositol 3-phosphate glycosyltransferase.